The primary structure comprises 110 residues: UPF0060 membrane protein MMAR_2961 (110 aa).

4 helical membrane-spanning segments follow: residues 6-26 (ILLF…VWQG), 32-52 (GLAW…VATL), 61-81 (ILAA…MAFD), and 90-110 (IVGA…PRAH).

The protein belongs to the UPF0060 family.

The protein localises to the cell membrane. The sequence is that of UPF0060 membrane protein MMAR_2961 from Mycobacterium marinum (strain ATCC BAA-535 / M).